The sequence spans 165 residues: Peptide methionine sulfoxide reductase MsrA (165 aa).

The active site involves Cys11.

The protein belongs to the MsrA Met sulfoxide reductase family.

The catalysed reaction is L-methionyl-[protein] + [thioredoxin]-disulfide + H2O = L-methionyl-(S)-S-oxide-[protein] + [thioredoxin]-dithiol. It catalyses the reaction [thioredoxin]-disulfide + L-methionine + H2O = L-methionine (S)-S-oxide + [thioredoxin]-dithiol. Its function is as follows. Has an important function as a repair enzyme for proteins that have been inactivated by oxidation. Catalyzes the reversible oxidation-reduction of methionine sulfoxide in proteins to methionine. This is Peptide methionine sulfoxide reductase MsrA from Ureaplasma urealyticum serovar 10 (strain ATCC 33699 / Western).